Here is a 463-residue protein sequence, read N- to C-terminus: Cysteine--tRNA ligase (463 aa).

Zn(2+) is bound at residue Cys29. A 'HIGH' region motif is present at residues 31–41; it reads PTVYNYAHIGN. 3 residues coordinate Zn(2+): Cys211, His236, and Glu240. Residues 269-273 carry the 'KMSKS' region motif; it reads KMSKS. Lys272 contributes to the ATP binding site.

Belongs to the class-I aminoacyl-tRNA synthetase family. Monomer. It depends on Zn(2+) as a cofactor.

It localises to the cytoplasm. The catalysed reaction is tRNA(Cys) + L-cysteine + ATP = L-cysteinyl-tRNA(Cys) + AMP + diphosphate. This chain is Cysteine--tRNA ligase, found in Caulobacter vibrioides (strain ATCC 19089 / CIP 103742 / CB 15) (Caulobacter crescentus).